We begin with the raw amino-acid sequence, 662 residues long: Leucine aminopeptidase 2 (662 aa).

Residues 178 to 180 and 304 to 309 contribute to the a peptide site; these read QLE and PYGGME. A Zn(2+)-binding site is contributed by H333. The active-site Proton acceptor is E334. H337 and E356 together coordinate Zn(2+). Y422 functions as the Proton donor in the catalytic mechanism.

Belongs to the peptidase M1 family. The cofactor is Zn(2+).

Its subcellular location is the cytoplasm. It is found in the nucleus. It carries out the reaction an epoxide + H2O = an ethanediol. In terms of biological role, aminopeptidase that preferentially cleaves di- and tripeptides. Also has low epoxide hydrolase activity (in vitro). Can hydrolyze the epoxide leukotriene LTA(4) but it forms preferentially 5,6-dihydroxy-7,9,11,14-eicosatetraenoic acid rather than the cytokine leukotriene B(4) as the product compared to the homologous mammalian enzyme (in vitro). This chain is Leucine aminopeptidase 2, found in Kluyveromyces lactis (strain ATCC 8585 / CBS 2359 / DSM 70799 / NBRC 1267 / NRRL Y-1140 / WM37) (Yeast).